The following is a 413-amino-acid chain: Serine/threonine transporter SstT (413 aa).

9 consecutive transmembrane segments (helical) span residues 15 to 35, 48 to 68, 82 to 102, 141 to 161, 178 to 198, 216 to 236, 290 to 310, 330 to 350, and 357 to 377; these read NIVI…TLAP, FVSA…AASI, VIVL…VMSF, ALMT…GLGL, CISA…FGLV, LLAV…PLIV, IPLG…VLTL, LVAA…LLLI, and FGIS…IGVV.

This sequence belongs to the dicarboxylate/amino acid:cation symporter (DAACS) (TC 2.A.23) family.

It is found in the cell inner membrane. It catalyses the reaction L-serine(in) + Na(+)(in) = L-serine(out) + Na(+)(out). The enzyme catalyses L-threonine(in) + Na(+)(in) = L-threonine(out) + Na(+)(out). Its function is as follows. Involved in the import of serine and threonine into the cell, with the concomitant import of sodium (symport system). The chain is Serine/threonine transporter SstT from Aliivibrio fischeri (strain ATCC 700601 / ES114) (Vibrio fischeri).